Consider the following 119-residue polypeptide: Toxin ICK-9 (119 aa).

The N-terminal stretch at 1-19 is a signal peptide; that stretch reads MMKLYSLVIIATLAAAAFA. 4 disulfides stabilise this stretch: Cys59/Cys74, Cys67/Cys80, Cys71/Cys116, and Cys73/Cys87.

This sequence belongs to the neurotoxin 25 family. ICK-8 subfamily. Expressed by the venom gland.

Its subcellular location is the secreted. Functionally, ion channel inhibitor. This is Toxin ICK-9 from Trittame loki (Brush-footed trapdoor spider).